We begin with the raw amino-acid sequence, 352 residues long: tRNA pseudouridine synthase D (352 aa).

Catalysis depends on D81, which acts as the Nucleophile. In terms of domain architecture, TRUD spans G157–L303.

It belongs to the pseudouridine synthase TruD family.

It catalyses the reaction uridine(13) in tRNA = pseudouridine(13) in tRNA. Its function is as follows. Responsible for synthesis of pseudouridine from uracil-13 in transfer RNAs. The chain is tRNA pseudouridine synthase D from Pseudomonas putida (strain W619).